The primary structure comprises 511 residues: Phosphoenolpyruvate carboxylase (511 aa).

Belongs to the PEPCase type 2 family. As to quaternary structure, homotetramer. It depends on Mg(2+) as a cofactor.

It catalyses the reaction oxaloacetate + phosphate = phosphoenolpyruvate + hydrogencarbonate. Catalyzes the irreversible beta-carboxylation of phosphoenolpyruvate (PEP) to form oxaloacetate (OAA), a four-carbon dicarboxylic acid source for the tricarboxylic acid cycle. In Saccharolobus islandicus (strain L.S.2.15 / Lassen #1) (Sulfolobus islandicus), this protein is Phosphoenolpyruvate carboxylase.